The primary structure comprises 400 residues: Dual specificity mitogen-activated protein kinase kinase 2 (400 aa).

N-acetylmethionine is present on Met1. Ser23 carries the phosphoserine modification. A Protein kinase domain is found at 72-369 (FERISELGAG…LKLLTNHAFI (298 aa)). ATP contacts are provided by residues 78–86 (LGAGNGGVV) and Lys101. Asp194 functions as the Proton acceptor in the catalytic mechanism. Phosphoserine; by RAF is present on residues Ser222 and Ser226. Positions 282-310 (PVVDGADGEPHSVSPRPRPPGRPISGHGM) are disordered. Phosphoserine is present on residues Ser293, Ser295, and Ser306. Thr394 and Thr396 each carry phosphothreonine.

This sequence belongs to the protein kinase superfamily. STE Ser/Thr protein kinase family. MAP kinase kinase subfamily. As to quaternary structure, interacts with MORG1. Interacts with SGK1. Interacts with KSR1. Interacts with KSR1 and BRAF; the interaction with KSR1 mediates KSR1-BRAF dimerization. Interacts with GLS. Requires Mg(2+) as cofactor. In terms of processing, MAPKK is itself dependent on Ser/Thr phosphorylation for activity catalyzed by MAP kinase kinase kinases (RAF or MEKK1). Phosphorylated by MAP2K1/MEK1. Expressed abundantly in the adult brain and muscle.

It is found in the cytoplasm. Its subcellular location is the membrane. It carries out the reaction L-seryl-[protein] + ATP = O-phospho-L-seryl-[protein] + ADP + H(+). It catalyses the reaction L-threonyl-[protein] + ATP = O-phospho-L-threonyl-[protein] + ADP + H(+). The enzyme catalyses L-tyrosyl-[protein] + ATP = O-phospho-L-tyrosyl-[protein] + ADP + H(+). In terms of biological role, catalyzes the concomitant phosphorylation of a threonine and a tyrosine residue in a Thr-Glu-Tyr sequence located in MAP kinases. Activates the ERK1 and ERK2 MAP kinases. Activates BRAF in a KSR1 or KSR2-dependent manner; by binding to KSR1 or KSR2 releases the inhibitory intramolecular interaction between KSR1 or KSR2 protein kinase and N-terminal domains which promotes KSR1 or KSR2-BRAF dimerization and BRAF activation. The protein is Dual specificity mitogen-activated protein kinase kinase 2 (Map2k2) of Rattus norvegicus (Rat).